A 312-amino-acid polypeptide reads, in one-letter code: Aspartate carbamoyltransferase catalytic subunit (312 aa).

Arginine 55 and threonine 56 together coordinate carbamoyl phosphate. Lysine 83 is a binding site for L-aspartate. Carbamoyl phosphate is bound by residues arginine 105, histidine 138, and glutamine 141. L-aspartate-binding residues include arginine 171 and arginine 225. The carbamoyl phosphate site is built by glycine 266 and proline 267.

It belongs to the aspartate/ornithine carbamoyltransferase superfamily. ATCase family. Heterododecamer (2C3:3R2) of six catalytic PyrB chains organized as two trimers (C3), and six regulatory PyrI chains organized as three dimers (R2).

It carries out the reaction carbamoyl phosphate + L-aspartate = N-carbamoyl-L-aspartate + phosphate + H(+). The protein operates within pyrimidine metabolism; UMP biosynthesis via de novo pathway; (S)-dihydroorotate from bicarbonate: step 2/3. Its function is as follows. Catalyzes the condensation of carbamoyl phosphate and aspartate to form carbamoyl aspartate and inorganic phosphate, the committed step in the de novo pyrimidine nucleotide biosynthesis pathway. This is Aspartate carbamoyltransferase catalytic subunit from Corynebacterium efficiens (strain DSM 44549 / YS-314 / AJ 12310 / JCM 11189 / NBRC 100395).